A 288-amino-acid chain; its full sequence is tRNA pseudouridine synthase B (288 aa).

Residue D38 is the Nucleophile of the active site.

This sequence belongs to the pseudouridine synthase TruB family. Type 1 subfamily.

It carries out the reaction uridine(55) in tRNA = pseudouridine(55) in tRNA. Functionally, responsible for synthesis of pseudouridine from uracil-55 in the psi GC loop of transfer RNAs. The sequence is that of tRNA pseudouridine synthase B from Carboxydothermus hydrogenoformans (strain ATCC BAA-161 / DSM 6008 / Z-2901).